The chain runs to 297 residues: Light-independent protochlorophyllide reductase iron-sulfur ATP-binding protein (297 aa).

Residues 41–46 and K70 contribute to the ATP site; that span reads GIGKST. S45 contributes to the Mg(2+) binding site. [4Fe-4S] cluster contacts are provided by C126 and C160. ATP-binding positions include 211–212 and 235–237; these read NR and PDL.

Belongs to the NifH/BchL/ChlL family. As to quaternary structure, homodimer. Protochlorophyllide reductase is composed of three subunits; BchL, BchN and BchB. The cofactor is [4Fe-4S] cluster.

It carries out the reaction chlorophyllide a + oxidized 2[4Fe-4S]-[ferredoxin] + 2 ADP + 2 phosphate = protochlorophyllide a + reduced 2[4Fe-4S]-[ferredoxin] + 2 ATP + 2 H2O. It participates in porphyrin-containing compound metabolism; bacteriochlorophyll biosynthesis (light-independent). Component of the dark-operative protochlorophyllide reductase (DPOR) that uses Mg-ATP and reduced ferredoxin to reduce ring D of protochlorophyllide (Pchlide) to form chlorophyllide a (Chlide). This reaction is light-independent. The L component serves as a unique electron donor to the NB-component of the complex, and binds Mg-ATP. In Methylobacterium radiotolerans (strain ATCC 27329 / DSM 1819 / JCM 2831 / NBRC 15690 / NCIMB 10815 / 0-1), this protein is Light-independent protochlorophyllide reductase iron-sulfur ATP-binding protein.